We begin with the raw amino-acid sequence, 1609 residues long: Chitin synthase 5 (1609 aa).

Disordered stretches follow at residues 1-188 (MNPF…DRER), 248-280 (SGLG…GRDE), and 294-320 (VSLR…ESKT). Residues 1-326 (MNPFESLPDA…ESKTSRIAPG (326 aa)) are Cytoplasmic-facing. Positions 34-44 (PGSTGRPQNPI) are enriched in polar residues. Residues 61–82 (PQQQQQQQQQQQQQQQRSQQPF) are compositionally biased toward low complexity. The span at 100–111 (AYLNSTSSQPTQ) shows a compositional bias: polar residues. The segment covering 134 to 146 (DSVKSYGDDKRSI) has biased composition (basic and acidic residues). Over residues 147–163 (NDPNSSSTALTQVNSLD) the composition is skewed to polar residues. Low complexity predominate over residues 253–267 (TGPTNVPPGGLGRAP). Basic and acidic residues predominate over residues 307 to 320 (PSKEVPRDLGESKT). Residues 327–347 (PVGGWMIYCYILTICCPGPFL) form a helical membrane-spanning segment. The Extracellular segment spans residues 348–364 (RIFGIRTPEQQRAWREK). The helical transmembrane segment at 365–385 (MGLIGIITLIMAAVGFLTFGF) threads the bilayer. Topologically, residues 386-624 (TQTVCGQQPD…ASKVELYLSL (239 aa)) are cytoplasmic. Residues 625-645 (VFIIGVVAIKFFMAVMFGWFI) traverse the membrane as a helical segment. The Extracellular portion of the chain corresponds to 646 to 1176 (SWRLGNYANE…MRFVVFMELT (531 aa)). N-linked (GlcNAc...) asparagine glycosylation is present at Asn654. The disordered stretch occupies residues 729-767 (GVASPLGGSPPGSPSVAGGRSSASLAPAHSRRSSFSGSP). Residues 742 to 752 (PSVAGGRSSAS) are compositionally biased toward low complexity. N-linked (GlcNAc...) asparagine glycans are attached at residues Asn1015 and Asn1144. A helical transmembrane segment spans residues 1177 to 1197 (GTLVLPAAIAFTLYVVVQAFL). The Cytoplasmic portion of the chain corresponds to 1198–1202 (PNVPT). A helical membrane pass occupies residues 1203–1223 (PTIPLILLALILGLPGILIVV). Over 1224 to 1227 (TSRK) the chain is Extracellular. The helical transmembrane segment at 1228-1248 (IAYVGWMLIYLLSLPIWNFVL) threads the bilayer. The Cytoplasmic portion of the chain corresponds to 1249–1609 (PLYAYWHMDD…PPGAAPPSFD (361 aa)). Disordered stretches follow at residues 1354-1381 (PNAM…PSGA) and 1399-1609 (TDAK…PSFD). 2 stretches are compositionally biased toward polar residues: residues 1502–1514 (NVST…TVSE) and 1530–1552 (GSAS…QTRP). The span at 1568–1588 (AQGVRQVQRGARRSQMPNSAA) shows a compositional bias: low complexity.

It belongs to the chitin synthase family. Class IV subfamily.

Its subcellular location is the cell membrane. The protein resides in the cytoplasmic vesicle membrane. The catalysed reaction is [(1-&gt;4)-N-acetyl-beta-D-glucosaminyl](n) + UDP-N-acetyl-alpha-D-glucosamine = [(1-&gt;4)-N-acetyl-beta-D-glucosaminyl](n+1) + UDP + H(+). Functionally, polymerizes chitin, a structural polymer of the cell wall and septum, by transferring the sugar moiety of UDP-GlcNAc to the non-reducing end of the growing chitin polymer. The chain is Chitin synthase 5 from Mycosarcoma maydis (Corn smut fungus).